Here is a 242-residue protein sequence, read N- to C-terminus: MSGQADTATTAEARTPAHAAHHLVEGVARVLTKPRFRGWIHVYSAGTAVLAGASLVAVSWAVGSAKAGLTTLAYTAATITMFTVSATYHRVNWKSATARNWMKRADHSMIFVFIAGSYTPFALLALPAHDGRVVLSIVWGGAIAGILLKMCWPAAPRSVGVPLYLLLGWVAVWYTATILHNAGVTALVLLFVGGALYSIGGILYAVRWPDPWPTTFGYHEFFHACTAVAAICHYIAMWFVVF.

Helical transmembrane passes span 42–62, 67–87, 108–128, 133–153, 159–179, 186–206, and 222–242; these read VYSAGTAVLAGASLVAVSWAV, AGLTTLAYTAATITMFTVSAT, SMIFVFIAGSYTPFALLALPA, VVLSIVWGGAIAGILLKMCWP, VGVPLYLLLGWVAVWYTATIL, ALVLLFVGGALYSIGGILYAV, and FHACTAVAAICHYIAMWFVVF.

The protein belongs to the UPF0073 (Hly-III) family.

It localises to the cell membrane. The chain is UPF0073 membrane protein Rv1085c from Mycobacterium tuberculosis (strain ATCC 25618 / H37Rv).